We begin with the raw amino-acid sequence, 453 residues long: GTPase Der (453 aa).

EngA-type G domains are found at residues 4 to 169 (PIVA…PPVT) and 177 to 352 (IKIA…EEHK). GTP contacts are provided by residues 10–17 (GRPNVGKS), 57–61 (DTGGL), 120–123 (NKCE), 183–190 (GRPNVGKS), 230–234 (DTAGI), and 295–298 (NKWD). Positions 353 to 438 (RRVSTSVINE…PIRLLWRSKK (86 aa)) constitute a KH-like domain.

This sequence belongs to the TRAFAC class TrmE-Era-EngA-EngB-Septin-like GTPase superfamily. EngA (Der) GTPase family. Associates with the 50S ribosomal subunit.

Functionally, GTPase that plays an essential role in the late steps of ribosome biogenesis. In Nostoc sp. (strain PCC 7120 / SAG 25.82 / UTEX 2576), this protein is GTPase Der.